The primary structure comprises 244 residues: Protein crossbronx (244 aa).

The UBC core domain maps to 20 to 176; it reads QQEYKILAEY…VQENIKESKE (157 aa). The interval 209–244 is disordered; that stretch reads AGRSKQTEPSAQQGNGGHATGLSWVKEGEFKPLSIE.

This sequence belongs to the ubiquitin-conjugating enzyme family. FTS subfamily.

The sequence is that of Protein crossbronx (cbx) from Drosophila simulans (Fruit fly).